Here is a 235-residue protein sequence, read N- to C-terminus: MLKLIDITWLYHHLPMRFTLAVERGEQVAILGPSGAGKSTLLNLIAGFLAPASGTLLIAGEDHTLTPPSRRPVSMLFQENNLFSHLNVQQNIGLGLNPGLTLNASQREKRDAIARQMGIESLMTRLPGELSGGQRQRVALARCLVREQPVLLLDEPFSALDPTLRQEMLTLVSDICRERQLTLLMVSHSVEDAARIAPRSIVVADGRIAWQGKTDELLSGQASASALLGIKSHIL.

An ABC transporter domain is found at 2-230 (LKLIDITWLY…QASASALLGI (229 aa)). 32–39 (GPSGAGKS) serves as a coordination point for ATP.

Belongs to the ABC transporter superfamily. Thiamine importer (TC 3.A.1.19.1) family. In terms of assembly, the complex is composed of two ATP-binding proteins (ThiQ), two transmembrane proteins (ThiP) and a solute-binding protein (ThiB).

The protein localises to the cell inner membrane. It carries out the reaction thiamine(out) + ATP + H2O = thiamine(in) + ADP + phosphate + H(+). Part of the ABC transporter complex ThiBPQ involved in thiamine import. Responsible for energy coupling to the transport system. The protein is Thiamine import ATP-binding protein ThiQ of Salmonella choleraesuis (strain SC-B67).